The primary structure comprises 177 residues: ATP synthase subunit delta (177 aa).

The protein belongs to the ATPase delta chain family. As to quaternary structure, F-type ATPases have 2 components, F(1) - the catalytic core - and F(0) - the membrane proton channel. F(1) has five subunits: alpha(3), beta(3), gamma(1), delta(1), epsilon(1). F(0) has three main subunits: a(1), b(2) and c(10-14). The alpha and beta chains form an alternating ring which encloses part of the gamma chain. F(1) is attached to F(0) by a central stalk formed by the gamma and epsilon chains, while a peripheral stalk is formed by the delta and b chains.

The protein resides in the cell inner membrane. Functionally, f(1)F(0) ATP synthase produces ATP from ADP in the presence of a proton or sodium gradient. F-type ATPases consist of two structural domains, F(1) containing the extramembraneous catalytic core and F(0) containing the membrane proton channel, linked together by a central stalk and a peripheral stalk. During catalysis, ATP synthesis in the catalytic domain of F(1) is coupled via a rotary mechanism of the central stalk subunits to proton translocation. Its function is as follows. This protein is part of the stalk that links CF(0) to CF(1). It either transmits conformational changes from CF(0) to CF(1) or is implicated in proton conduction. This chain is ATP synthase subunit delta, found in Flavobacterium psychrophilum (strain ATCC 49511 / DSM 21280 / CIP 103535 / JIP02/86).